Here is a 403-residue protein sequence, read N- to C-terminus: S-arrestin (403 aa).

The segment at 11-19 is interaction with RHO; that stretch reads HVIFKKVSR. Thr231 carries the post-translational modification Phosphothreonine. The disordered stretch occupies residues 381-403; it reads RQNLKDTGENTEGKKDEDAGQDE.

Belongs to the arrestin family. Monomer. Homodimer. Homotetramer. Interacts with RHO (via the phosphorylated C-terminus). In terms of tissue distribution, detected in retina (at protein level).

The protein localises to the cell projection. Its subcellular location is the cilium. It localises to the photoreceptor outer segment. The protein resides in the membrane. In terms of biological role, binds to photoactivated, phosphorylated RHO and terminates RHO signaling via G-proteins by competing with G-proteins for the same binding site on RHO. May play a role in preventing light-dependent degeneration of retinal photoreceptor cells. The polypeptide is S-arrestin (Sag) (Mus musculus (Mouse)).